Consider the following 115-residue polypeptide: Large ribosomal subunit protein P2y (115 aa).

Residues 63 to 115 are disordered; it reads ASVPSGGGGGVAVASATSGGGGGGGASAAESKKEEKKEEKEESDDDMGFSLFE. Basic and acidic residues predominate over residues 92–102; sequence ESKKEEKKEEK. Position 105 is a phosphoserine (serine 105).

The protein belongs to the eukaryotic ribosomal protein P1/P2 family. As to quaternary structure, P1 and P2 exist as dimers at the large ribosomal subunit. Post-translationally, phosphorylated.

In terms of biological role, plays an important role in the elongation step of protein synthesis. The chain is Large ribosomal subunit protein P2y (RPP2B) from Arabidopsis thaliana (Mouse-ear cress).